The chain runs to 87 residues: Small ribosomal subunit protein bS20 (87 aa).

Belongs to the bacterial ribosomal protein bS20 family.

Its function is as follows. Binds directly to 16S ribosomal RNA. The sequence is that of Small ribosomal subunit protein bS20 from Nitrosomonas europaea (strain ATCC 19718 / CIP 103999 / KCTC 2705 / NBRC 14298).